A 338-amino-acid chain; its full sequence is Envelope glycoprotein K (338 aa).

The N-terminal stretch at 1-30 (MLAVRSLQHLTTVIFITAYGLVLAWYIVFG) is a signal peptide. Topologically, residues 31–121 (ASPLHRCIYA…VNCLEALWDT (91 aa)) are extracellular. Residues 31–121 (ASPLHRCIYA…VNCLEALWDT (91 aa)) form an involved in fusion region. N-linked (GlcNAc...) asparagine; by host glycosylation is found at Asn-48 and Asn-58. The helical transmembrane segment at 122-140 (QMRLVVVGWFLYLAFVALH) threads the bilayer. The Cytoplasmic segment spans residues 141 to 212 (QRRCMFGVVS…DPVTFLYHRP (72 aa)). The helical transmembrane segment at 213–233 (AIGVIVGCELLLRFVALGLIV) threads the bilayer. Over 234 to 243 (GTALISRGAC) the chain is Extracellular. Residues 244 to 264 (AITHPLFLTITTWCFVSIIAL) form a helical membrane-spanning segment. The Cytoplasmic segment spans residues 265–301 (TELYFILRRGSAPKNAEPAAPRGRSKGWSGVCGRCCS). The tract at residues 265-301 (TELYFILRRGSAPKNAEPAAPRGRSKGWSGVCGRCCS) is interaction with UL20. The helical transmembrane segment at 302 to 322 (IILSGIAVRLCYIAVVAGVVL) threads the bilayer. Residues 323–338 (VALRYEQEIQRRLFDL) lie on the Extracellular side of the membrane.

It belongs to the alphaherpesvirinae glycoprotein K family. Interacts (via UL20 interaction region) with protein UL20 (via N-terminus); this interaction probably plays a role in the coordinate transport of protein UL20 and gK to the trans-Golgi network (TGN), and is required for the cell surface expression of gK. Post-translationally, N-glycosylated.

Its subcellular location is the host cell membrane. The protein localises to the host endosome membrane. The protein resides in the host Golgi apparatus membrane. Functionally, glycoprotein that probably modulates membrane fusion events during secondary envelopment of cytoplasmic capsids that bud into specific trans-Golgi network (TGN)-derived membranes. Also plays a role, together with gB, in virus-induced cell-to-cell fusion (syncytia formation). Seems to block fusion of virions with infected-cell membranes. This chain is Envelope glycoprotein K (gK), found in Human herpesvirus 2 (strain HG52) (HHV-2).